A 416-amino-acid polypeptide reads, in one-letter code: Glutamyl-tRNA reductase (416 aa).

Substrate-binding positions include 48–51 (TCNR), Ser-104, 109–111 (EPQ), and Gln-115. The active-site Nucleophile is the Cys-49. 184–189 (GAGEMI) is an NADP(+) binding site.

It belongs to the glutamyl-tRNA reductase family. As to quaternary structure, homodimer.

It carries out the reaction (S)-4-amino-5-oxopentanoate + tRNA(Glu) + NADP(+) = L-glutamyl-tRNA(Glu) + NADPH + H(+). It functions in the pathway porphyrin-containing compound metabolism; protoporphyrin-IX biosynthesis; 5-aminolevulinate from L-glutamyl-tRNA(Glu): step 1/2. Functionally, catalyzes the NADPH-dependent reduction of glutamyl-tRNA(Glu) to glutamate 1-semialdehyde (GSA). This chain is Glutamyl-tRNA reductase, found in Dechloromonas aromatica (strain RCB).